The primary structure comprises 185 residues: Adenine phosphoribosyltransferase (185 aa).

The protein belongs to the purine/pyrimidine phosphoribosyltransferase family. Homodimer.

The protein localises to the cytoplasm. It carries out the reaction AMP + diphosphate = 5-phospho-alpha-D-ribose 1-diphosphate + adenine. The protein operates within purine metabolism; AMP biosynthesis via salvage pathway; AMP from adenine: step 1/1. In terms of biological role, catalyzes a salvage reaction resulting in the formation of AMP, that is energically less costly than de novo synthesis. This chain is Adenine phosphoribosyltransferase, found in Arthrobacter sp. (strain FB24).